Consider the following 186-residue polypeptide: TATA-box-binding protein E (186 aa).

Repeat copies occupy residues 10–86 (IENV…FDKL) and 101–179 (VQNI…TSRL).

This sequence belongs to the TBP family.

Its function is as follows. General factor that plays a role in the activation of archaeal genes transcribed by RNA polymerase. Binds specifically to the TATA box promoter element which lies close to the position of transcription initiation. This chain is TATA-box-binding protein E (tbpE), found in Halobacterium salinarum (strain ATCC 700922 / JCM 11081 / NRC-1) (Halobacterium halobium).